Consider the following 434-residue polypeptide: FAD-dependent monooxygenase cfoG (434 aa).

Residues 1–22 (MKSSPGLHIIIVGAGITGLATA) form the signal peptide. FAD is bound at residue E36. Active-site residues include R193 and Y233. D314 and G327 together coordinate FAD.

This sequence belongs to the paxM FAD-dependent monooxygenase family. In terms of assembly, monomer. It depends on FAD as a cofactor.

It participates in secondary metabolite biosynthesis; flavonoid biosynthesis. Its function is as follows. Monooxygenase; part of the gene cluster that mediates the biosynthesis of chlorflavonin, a fungal flavonoid with acetolactate synthase inhibitory activity. Within the pathway, cfoG is responsible for the hydroxylation of the flavonoid skeleton at position C8. The pathway begins with the PKS-NRPS hybrid synthetase cfoA that uses benzoic acid or p-hydroxybenzoic acid as a starter unit with four rounds of chain elongation using malonyl-CoA to form the chalcone skeleton. Then, a new type of chalcone isomerase, cfoK, catalyzes the conversion of the chalcone into a flavanone by a histidine-mediated oxa-Michael addition mechanism. The desaturation of flavanone to flavone is catalyzed by a new type of flavone synthase, the flavin mononucleotide (FMN)-dependent oxidoreductase cfoJ. Monooxygenases cfoF, cfoG, and P450 cfoH are responsible for the hydroxylation of the flavonoid skeleton at sites C3, C8, and C2', respectively. Like cfoF, the dehydratase cfoI plays also a role in the hydroxylation of position C3. Methyltransferases cfoB, cfoC, and cfoD then catalyze the methylation of C7-OH, C8-OH, and C3-OH, respectively. Finally, the monooxygenase cfoE is responsible for the chlorination of flavonoid at position C3'. In Aspergillus candidus, this protein is FAD-dependent monooxygenase cfoG.